The following is a 536-amino-acid chain: Phosphoenolpyruvate carboxykinase (ATP) (536 aa).

Residues arginine 61, tyrosine 195, and lysine 201 each coordinate substrate. Residues lysine 201, histidine 220, and 236–244 each bind ATP; that span reads GLSGTGKTT. Positions 201 and 220 each coordinate Mn(2+). Mn(2+) is bound at residue aspartate 257. ATP is bound by residues glutamate 285, arginine 322, and threonine 447. A substrate-binding site is contributed by arginine 322.

Belongs to the phosphoenolpyruvate carboxykinase (ATP) family. Mn(2+) is required as a cofactor.

Its subcellular location is the cytoplasm. The enzyme catalyses oxaloacetate + ATP = phosphoenolpyruvate + ADP + CO2. The protein operates within carbohydrate biosynthesis; gluconeogenesis. Involved in the gluconeogenesis. Catalyzes the conversion of oxaloacetate (OAA) to phosphoenolpyruvate (PEP) through direct phosphoryl transfer between the nucleoside triphosphate and OAA. The polypeptide is Phosphoenolpyruvate carboxykinase (ATP) (Brucella suis biovar 1 (strain 1330)).